The chain runs to 177 residues: NAD(P)H-quinone oxidoreductase subunit 6, chloroplastic (177 aa).

5 helical membrane-spanning segments follow: residues 10 to 30 (ILVV…VLFT), 33 to 53 (IYSA…YILL), 61 to 81 (AQLL…VMFM), 92 to 112 (LWTV…FLLI), and 152 to 172 (FFLP…GAIS).

This sequence belongs to the complex I subunit 6 family. As to quaternary structure, NDH is composed of at least 16 different subunits, 5 of which are encoded in the nucleus.

Its subcellular location is the plastid. The protein localises to the chloroplast thylakoid membrane. It catalyses the reaction a plastoquinone + NADH + (n+1) H(+)(in) = a plastoquinol + NAD(+) + n H(+)(out). It carries out the reaction a plastoquinone + NADPH + (n+1) H(+)(in) = a plastoquinol + NADP(+) + n H(+)(out). Its function is as follows. NDH shuttles electrons from NAD(P)H:plastoquinone, via FMN and iron-sulfur (Fe-S) centers, to quinones in the photosynthetic chain and possibly in a chloroplast respiratory chain. The immediate electron acceptor for the enzyme in this species is believed to be plastoquinone. Couples the redox reaction to proton translocation, and thus conserves the redox energy in a proton gradient. This is NAD(P)H-quinone oxidoreductase subunit 6, chloroplastic (ndhG) from Lemna minor (Common duckweed).